Here is a 490-residue protein sequence, read N- to C-terminus: O-acetyltransferase PaAT-2 (490 aa).

H165 functions as the Proton acceptor in the catalytic mechanism.

Belongs to the plant acyltransferase family.

The protein operates within mycotoxin biosynthesis. In terms of biological role, O-acetyltransferase; part of the 2 gene clusters that mediate the biosynthesis of fusicoccins, diterpene glucosides that display phytohormone-like activity and function as potent activators of plasma membrane H(+)-ATPases in plants by modifying 14-3-3 proteins and cause the plant disease constriction canker. The first step in the pathway is performed by the fusicoccadiene synthase PaFS that possesses both prenyl transferase and terpene cyclase activity, converting isopentenyl diphosphate and dimethylallyl diphosphate into geranylgeranyl diphosphate (GGDP) and successively converting GGDP into fusicocca-2,10(14)-diene, a precursor for fusicoccin H. The second step is the oxidation at the C-8 position by the cytochrome P450 monooxygenase PaP450-2 to yield fusicocca-2,10(14)-diene-8-beta-ol. The cytochrome P450 monooxygenase PaP450-1 then catalyzes the hydroxylation at the C-16 position to produce fusicocca-2,10(14)-diene-8-beta,16-diol. The dioxygenase fc-dox then catalyzes the 16-oxydation of fusicocca-2,10(14)-diene-8-beta,16-diol to yield an aldehyde (8-beta-hydroxyfusicocca-1,10(14)-dien-16-al). The short-chain dehydrogenase/reductase fc-sdr catalyzes the reduction of the aldehyde to yield fusicocca-1,10(14)-diene-8-beta,16-diol. The next step is the hydroxylation at C-9 performed by the cytochrome P450 monooxygenase PaP450-3 that leads to fusicoccin H aglycon which is glycosylated to fusicoccin H by the O-glycosyltransferase PaGT. Hydroxylation at C-12 by the cytochrome P450 monooxygenase PaP450-4 leads then to the production of fusicoccin Q and is followed by methylation by the O-methyltransferase PaMT to yield fusicoccin P. Fusicoccin P is further converted to fusicoccin J via prenylation by the O-glucose prenyltransferase PaPT. Cytochrome P450 monooxygenase PaP450-5 then performs hydroxylation at C-19 to yield dideacetyl-fusicoccin A which is acetylated to 3'-O-deacetyl-fusicoccin A by the O-acetyltransferase PaAT-2. Finally, a another acetylation by the O-acetyltransferase PaAT-1 yields fusicoccin A. The sequence is that of O-acetyltransferase PaAT-2 from Phomopsis amygdali (Fusicoccum amygdali).